The primary structure comprises 63 residues: Chymotrypsin/elastase isoinhibitor 1 (63 aa).

Cystine bridges form between Cys-5-Cys-38, Cys-14-Cys-33, Cys-17-Cys-29, Cys-21-Cys-60, and Cys-40-Cys-54. The TIL domain occupies 5 to 60 (CGPNEVWTECTGCEMKCGPDENTPCPLMCRRPSCECSPGRGMRRTNDGKCIPASQC).

Belongs to the serine protease inhibitor-like (TIL domain-containing) family.

It localises to the secreted. Functionally, defends the organism against the host's proteinases. The sequence is that of Chymotrypsin/elastase isoinhibitor 1 from Ascaris suum (Pig roundworm).